Here is a 228-residue protein sequence, read N- to C-terminus: Leucyl/phenylalanyl-tRNA--protein transferase (228 aa).

Belongs to the L/F-transferase family.

It is found in the cytoplasm. It catalyses the reaction N-terminal L-lysyl-[protein] + L-leucyl-tRNA(Leu) = N-terminal L-leucyl-L-lysyl-[protein] + tRNA(Leu) + H(+). The enzyme catalyses N-terminal L-arginyl-[protein] + L-leucyl-tRNA(Leu) = N-terminal L-leucyl-L-arginyl-[protein] + tRNA(Leu) + H(+). It carries out the reaction L-phenylalanyl-tRNA(Phe) + an N-terminal L-alpha-aminoacyl-[protein] = an N-terminal L-phenylalanyl-L-alpha-aminoacyl-[protein] + tRNA(Phe). Its function is as follows. Functions in the N-end rule pathway of protein degradation where it conjugates Leu, Phe and, less efficiently, Met from aminoacyl-tRNAs to the N-termini of proteins containing an N-terminal arginine or lysine. The protein is Leucyl/phenylalanyl-tRNA--protein transferase of Lawsonia intracellularis (strain PHE/MN1-00).